Consider the following 306-residue polypeptide: Aspartate carbamoyltransferase catalytic subunit (306 aa).

Carbamoyl phosphate contacts are provided by Arg51 and Thr52. Lys79 contacts L-aspartate. Residues Arg101, His130, and Gln133 each coordinate carbamoyl phosphate. The L-aspartate site is built by Arg163 and Arg215. Residues Gly256 and Pro257 each contribute to the carbamoyl phosphate site.

The protein belongs to the aspartate/ornithine carbamoyltransferase superfamily. ATCase family. As to quaternary structure, heterododecamer (2C3:3R2) of six catalytic PyrB chains organized as two trimers (C3), and six regulatory PyrI chains organized as three dimers (R2).

It carries out the reaction carbamoyl phosphate + L-aspartate = N-carbamoyl-L-aspartate + phosphate + H(+). It participates in pyrimidine metabolism; UMP biosynthesis via de novo pathway; (S)-dihydroorotate from bicarbonate: step 2/3. Catalyzes the condensation of carbamoyl phosphate and aspartate to form carbamoyl aspartate and inorganic phosphate, the committed step in the de novo pyrimidine nucleotide biosynthesis pathway. The chain is Aspartate carbamoyltransferase catalytic subunit from Ehrlichia ruminantium (strain Welgevonden).